Here is a 332-residue protein sequence, read N- to C-terminus: PTS-dependent dihydroxyacetone kinase, dihydroxyacetone-binding subunit DhaK (332 aa).

In terms of domain architecture, DhaK spans 9-331 (QPQDVVSEML…LNEDVKTISW (323 aa)). Residues 55–58 (GSGH), Lys106, and Asp111 each bind dihydroxyacetone. His58 serves as the catalytic Proton acceptor. The active-site Tele-hemiaminal-histidine intermediate is the His220.

Homodimer. The dihydroxyacetone kinase complex is composed of a homodimer of DhaM, a homodimer of DhaK and the subunit DhaL.

It carries out the reaction dihydroxyacetone + phosphoenolpyruvate = dihydroxyacetone phosphate + pyruvate. The protein operates within polyol metabolism; glycerol degradation. Functionally, dihydroxyacetone binding subunit of the dihydroxyacetone kinase, which is responsible the phosphoenolpyruvate (PEP)-dependent phosphorylation of dihydroxyacetone via a phosphoryl group transfer from DhaL-ATP. This is PTS-dependent dihydroxyacetone kinase, dihydroxyacetone-binding subunit DhaK from Lactococcus lactis subsp. lactis (strain IL1403) (Streptococcus lactis).